We begin with the raw amino-acid sequence, 391 residues long: MLQTKTDPMVISMGPHHPSMHGVLRLIVTLDGENVIDCEPVLGYLHRAMEKIAENRTIVQYLPYVTRWDYLATMFTEAITVNAPEKLANIEVPKRASYIRVIMLELSRIASHLLWLGPFMADIGAQTPFFYILREREMIYDLFEAATGMRMMHNYFRIGGVASDLPYGWVDKCLDFSDYFLPKVDEYERLITNNPIFLKRVRDVGFISREEAINWGLSGPMLRASGVQWDLRKVDNYECYGELDWNVQWQSDGDCLARYLVRLGEMRESTKIIQQALKAIPGGPYENLEARRLSKGRKSEWNNFEYQFVGKKPSPTFKIPKQEHYVRVEAPKGELGVFLMGDDNVFPWRWKIRSPGFINVQILPELVRGMKLADIMTILGSIDIIMGEVDR.

This sequence belongs to the complex I 49 kDa subunit family. In terms of assembly, NDH is composed of at least 16 different subunits, 5 of which are encoded in the nucleus.

Its subcellular location is the plastid. The protein localises to the chloroplast thylakoid membrane. The catalysed reaction is a plastoquinone + NADH + (n+1) H(+)(in) = a plastoquinol + NAD(+) + n H(+)(out). It carries out the reaction a plastoquinone + NADPH + (n+1) H(+)(in) = a plastoquinol + NADP(+) + n H(+)(out). Its function is as follows. NDH shuttles electrons from NAD(P)H:plastoquinone, via FMN and iron-sulfur (Fe-S) centers, to quinones in the photosynthetic chain and possibly in a chloroplast respiratory chain. The immediate electron acceptor for the enzyme in this species is believed to be plastoquinone. Couples the redox reaction to proton translocation, and thus conserves the redox energy in a proton gradient. This is NAD(P)H-quinone oxidoreductase subunit H, chloroplastic from Mesostigma viride (Green alga).